Reading from the N-terminus, the 41-residue chain is Large ribosomal subunit protein bL36 (41 aa).

It belongs to the bacterial ribosomal protein bL36 family.

In Brucella abortus (strain S19), this protein is Large ribosomal subunit protein bL36.